Here is a 417-residue protein sequence, read N- to C-terminus: uncharacterized protein (417 aa).

Transmembrane regions (helical) follow at residues 1-21 (MSVL…VLLS), 32-52 (VVGA…VPAG), 96-116 (VLPI…LGIM), 168-188 (LFAI…AGYA), 192-212 (VPLT…LLFA), 261-281 (IAFV…GGWF), 286-306 (LTLQ…IGVT), 351-371 (AIIT…ILIG), and 392-412 (VIAG…FIGL).

The protein belongs to the concentrative nucleoside transporter (CNT) (TC 2.A.41) family.

The protein localises to the cell inner membrane. This is an uncharacterized protein from Haemophilus influenzae (strain ATCC 51907 / DSM 11121 / KW20 / Rd).